The chain runs to 308 residues: Transaldolase (308 aa).

Lys125 acts as the Schiff-base intermediate with substrate in catalysis.

The protein belongs to the transaldolase family. Type 1 subfamily. As to quaternary structure, homodimer.

The protein resides in the cytoplasm. The catalysed reaction is D-sedoheptulose 7-phosphate + D-glyceraldehyde 3-phosphate = D-erythrose 4-phosphate + beta-D-fructose 6-phosphate. The protein operates within carbohydrate degradation; pentose phosphate pathway; D-glyceraldehyde 3-phosphate and beta-D-fructose 6-phosphate from D-ribose 5-phosphate and D-xylulose 5-phosphate (non-oxidative stage): step 2/3. Functionally, transaldolase is important for the balance of metabolites in the pentose-phosphate pathway. This is Transaldolase from Stutzerimonas stutzeri (strain A1501) (Pseudomonas stutzeri).